Reading from the N-terminus, the 209-residue chain is High-affinity nitrate transporter 3.2 (209 aa).

The N-terminal stretch at 1-22 (MAIHTLLFVSLLIFSLIESSSG) is a signal peptide. The helical transmembrane segment at 177–197 (LDIASTFFSVFSVVSLFVFFV) threads the bilayer.

The protein belongs to the NAR2 family. As to expression, bearly detected in roots and shoots.

The protein localises to the cell membrane. Functionally, acts as a dual component transporter with NTR2.1. Required for high-affinity nitrate transport. The polypeptide is High-affinity nitrate transporter 3.2 (Arabidopsis thaliana (Mouse-ear cress)).